The primary structure comprises 757 residues: Protein lsd90 (757 aa).

4 stretches are compositionally biased toward polar residues: residues 1 to 11, 19 to 36, 51 to 69, and 94 to 118; these read MVGTINESMQN, TAQS…SSSK, TAGN…SKNL, and DTSN…STYE. 4 disordered regions span residues 1–131, 224–244, 589–633, and 657–757; these read MVGT…SRSS, ERAR…EKQA, AQAE…KSKS, and AYVG…MSNK. Positions 166–604 form a coiled coil; it reads DEKTLQDLLE…KVESEYNSVK (439 aa). The segment covering 589-598 has biased composition (basic and acidic residues); the sequence is AQAEQSKVES. The segment covering 619-632 has biased composition (polar residues); the sequence is VTTNEPTDVSTKSK. Positions 674 to 693 are enriched in low complexity; that stretch reads STPSTLPTSASTNAAATTTT. ATP is bound at residue 718–725; sequence GTTGLGKS.

In terms of biological role, may be involved in the metabolism of very long-chain fatty acid-containing phospholipids (VLCFA-PL). The polypeptide is Protein lsd90 (lsd90) (Schizosaccharomyces pombe (strain 972 / ATCC 24843) (Fission yeast)).